The primary structure comprises 197 residues: MVERKASVERNTLETQVKCSINLDGSGKARFDIGVPFLEHMLDQIARHGLIDLDIECKGDTHIDDHHTVEDVGITLGMAFAQAIGDKKGIFRYGHAYVALDEALSRVVIDFSGRPGLQMHVPYTRASVGGFDVDLFQEFFQGFVNHALVTLHIDNLRGHNTHHQIETVFKAFGRALRMAITLDERMAGQMPSTKGCL.

This sequence belongs to the imidazoleglycerol-phosphate dehydratase family.

Its subcellular location is the cytoplasm. It catalyses the reaction D-erythro-1-(imidazol-4-yl)glycerol 3-phosphate = 3-(imidazol-4-yl)-2-oxopropyl phosphate + H2O. The protein operates within amino-acid biosynthesis; L-histidine biosynthesis; L-histidine from 5-phospho-alpha-D-ribose 1-diphosphate: step 6/9. The sequence is that of Imidazoleglycerol-phosphate dehydratase from Pseudomonas putida (strain GB-1).